Reading from the N-terminus, the 198-residue chain is Glycerol-3-phosphate acyltransferase (198 aa).

Helical transmembrane passes span 1–21 (MNLL…GYLA), 55–75 (VFLL…YLLL), 79–99 (WQVA…WLNW), 111–131 (IFLG…IIMI), 136–156 (IVSL…FLSF), and 158–178 (GSNL…LVIW).

This sequence belongs to the PlsY family. In terms of assembly, probably interacts with PlsX.

It localises to the cell inner membrane. The enzyme catalyses an acyl phosphate + sn-glycerol 3-phosphate = a 1-acyl-sn-glycero-3-phosphate + phosphate. It functions in the pathway lipid metabolism; phospholipid metabolism. In terms of biological role, catalyzes the transfer of an acyl group from acyl-phosphate (acyl-PO(4)) to glycerol-3-phosphate (G3P) to form lysophosphatidic acid (LPA). This enzyme utilizes acyl-phosphate as fatty acyl donor, but not acyl-CoA or acyl-ACP. This chain is Glycerol-3-phosphate acyltransferase, found in Prochlorococcus marinus (strain NATL2A).